We begin with the raw amino-acid sequence, 423 residues long: Protein CLP1 homolog (423 aa).

Residues E16, K57, and 119–124 each bind ATP; that span reads DVGKST.

Belongs to the Clp1 family. Clp1 subfamily.

Its subcellular location is the nucleus. In terms of biological role, required for endonucleolytic cleavage during polyadenylation-dependent pre-mRNA 3'-end formation. The protein is Protein CLP1 homolog (cbc) of Drosophila simulans (Fruit fly).